The following is a 134-amino-acid chain: uncharacterized protein (134 aa).

3 consecutive transmembrane segments (helical) span residues Phe5–Phe25, Leu30–Ile50, and Leu62–Leu82.

It belongs to the bacteriophage holin family. Cp-1 holin subfamily.

The protein localises to the cell membrane. This is an uncharacterized protein from Bacillus subtilis (strain 168).